The chain runs to 316 residues: MRDLKIPEQRHPEKAHRPDNAQPKKPSWIRVKAPGGKGYAETHKIMRENNLVTVCEEAGCPNVGECWSQGHATMMIMGEICTRGCTFCNIATGRPDTLDAFEPGRVAHAVQKLGLNHVVITSVDRDDLEDGGADHFAQTIRAVRHRSPQTTIEILTPDFLKCAPEVLETVVEAKPDVFNHNLETVPGLYPEVRPGARYFHSLRLLQRVKELDPSIFTKSGIMVGLGEQAPQVKQVMDDMRAADVDFLTIGQYLQPTPKHHAVDRFVTPEEFESYEKAAYGKGFLMVSATPLTRSSYHAGDDFAKLRAARNAKLGLA.

Residues 1–19 (MRDLKIPEQRHPEKAHRPD) are compositionally biased toward basic and acidic residues. The segment at 1-31 (MRDLKIPEQRHPEKAHRPDNAQPKKPSWIRV) is disordered. [4Fe-4S] cluster-binding residues include C55, C60, C66, C81, C85, C88, and S295. The 218-residue stretch at 67–284 (WSQGHATMMI…EKAAYGKGFL (218 aa)) folds into the Radical SAM core domain.

This sequence belongs to the radical SAM superfamily. Lipoyl synthase family. It depends on [4Fe-4S] cluster as a cofactor.

It localises to the cytoplasm. The enzyme catalyses [[Fe-S] cluster scaffold protein carrying a second [4Fe-4S](2+) cluster] + N(6)-octanoyl-L-lysyl-[protein] + 2 oxidized [2Fe-2S]-[ferredoxin] + 2 S-adenosyl-L-methionine + 4 H(+) = [[Fe-S] cluster scaffold protein] + N(6)-[(R)-dihydrolipoyl]-L-lysyl-[protein] + 4 Fe(3+) + 2 hydrogen sulfide + 2 5'-deoxyadenosine + 2 L-methionine + 2 reduced [2Fe-2S]-[ferredoxin]. It functions in the pathway protein modification; protein lipoylation via endogenous pathway; protein N(6)-(lipoyl)lysine from octanoyl-[acyl-carrier-protein]: step 2/2. Catalyzes the radical-mediated insertion of two sulfur atoms into the C-6 and C-8 positions of the octanoyl moiety bound to the lipoyl domains of lipoate-dependent enzymes, thereby converting the octanoylated domains into lipoylated derivatives. This is Lipoyl synthase from Ruegeria sp. (strain TM1040) (Silicibacter sp.).